Reading from the N-terminus, the 445-residue chain is Chromosome partition protein MukF (445 aa).

The tract at residues 213-241 (LSETSSTLRELQDTLQAASDELQTQILDI) is leucine-zipper.

Belongs to the MukF family. As to quaternary structure, interacts, and probably forms a ternary complex, with MukE and MukB via its C-terminal region. The complex formation is stimulated by calcium or magnesium. It is required for an interaction between MukE and MukB.

Its subcellular location is the cytoplasm. The protein resides in the nucleoid. In terms of biological role, involved in chromosome condensation, segregation and cell cycle progression. May participate in facilitating chromosome segregation by condensation DNA from both sides of a centrally located replisome during cell division. Not required for mini-F plasmid partitioning. Probably acts via its interaction with MukB and MukE. Overexpression results in anucleate cells. It has a calcium binding activity. In Vibrio parahaemolyticus serotype O3:K6 (strain RIMD 2210633), this protein is Chromosome partition protein MukF.